A 467-amino-acid polypeptide reads, in one-letter code: Replication factor C large subunit (467 aa).

47–54 (GPPGVGKT) is an ATP binding site.

Belongs to the activator 1 small subunits family. RfcL subfamily. Heteromultimer composed of small subunits (RfcS) and large subunits (RfcL).

Part of the RFC clamp loader complex which loads the PCNA sliding clamp onto DNA. The sequence is that of Replication factor C large subunit from Methanothrix thermoacetophila (strain DSM 6194 / JCM 14653 / NBRC 101360 / PT) (Methanosaeta thermophila).